A 340-amino-acid chain; its full sequence is Heat-inducible transcription repressor HrcA (340 aa).

This sequence belongs to the HrcA family.

Its function is as follows. Negative regulator of class I heat shock genes (grpE-dnaK-dnaJ and groELS operons). Prevents heat-shock induction of these operons. This Burkholderia mallei (strain NCTC 10247) protein is Heat-inducible transcription repressor HrcA.